The following is a 291-amino-acid chain: Nucleotide-binding protein lhv_0732 (291 aa).

ATP is bound at residue 13–20 (GMSGAGKT). Residue 61–64 (DLRV) coordinates GTP.

It belongs to the RapZ-like family.

Displays ATPase and GTPase activities. The polypeptide is Nucleotide-binding protein lhv_0732 (Lactobacillus helveticus (strain DPC 4571)).